The chain runs to 70 residues: Potassium channel toxin kappa-KTx 2.5 (70 aa).

Residues 1–26 form the signal peptide; it reads MESSRKSYVLMLFLAFVIMNVCSVSG. Residues 27–42 constitute a propeptide that is removed on maturation; it reads EPKDGEIAGFEMEEAR. Cystine bridges form between C46–C64 and C50–C60.

This sequence belongs to the short scorpion toxin superfamily. Potassium channel inhibitor kappa-KTx family. Kappa-KTx 2 subfamily. As to expression, expressed by the venom gland.

Its subcellular location is the secreted. Functionally, voltage-independently blocks potassium currents on hKv1.1/KCNA1 (IC(50)=217 uM), and hKv1.4/KCNA4 (IC(50)=71 uM) (expressed in CHO cells). This chain is Potassium channel toxin kappa-KTx 2.5, found in Opisthacanthus cayaporum (South American scorpion).